The sequence spans 314 residues: Secreted frizzled-related protein 1 (314 aa).

Positions 1–31 are cleaved as a signal peptide; it reads MGVGRSARGRGGAASGVLLALAAALLAAGSA. The FZ domain maps to 53-169; that stretch reads TKPPQCVDIP…FPEGDVCIAM (117 aa). Disulfide bonds link C58–C121, C68–C114, C105–C140, C129–C166, and C133–C157. A glycan (N-linked (GlcNAc...) asparagine) is linked at N173. Cystine bridges form between C186–C256, C189–C258, and C203–C306. Positions 186-306 constitute an NTR domain; it reads CPPCDNELKS…FMKRMKNHEC (121 aa).

Belongs to the secreted frizzled-related protein (sFRP) family. In terms of assembly, interacts with WNT8, WNT1, WNT2, WNT4 and FRZD6. Interacts with MYOC. As to expression, highly expressed in kidney and embryonic heart. Also highly expressed in the eye, where it is principally localized to the ciliary body and the lens epithelium. Weaker expression in heart, lung and brain. In the brain, is expressed exclusively in the choroid plexus.

It is found in the secreted. Its function is as follows. Soluble frizzled-related proteins (sFRPS) function as modulators of Wnt signaling through direct interaction with Wnts. They have a role in regulating cell growth and differentiation in specific cell types. SFRP1 decreases intracellular beta-catenin levels. Has antiproliferative effects on vascular cells, in vitro and in vivo, and can induce, in vivo, an angiogenic response. In vascular cell cycle, delays the G1 phase and entry into the S phase. In kidney development, inhibits tubule formation and bud growth in metanephroi. Inhibits WNT1/WNT4-mediated TCF-dependent transcription. The protein is Secreted frizzled-related protein 1 of Mus musculus (Mouse).